The primary structure comprises 130 residues: Small ribosomal subunit protein uS8 (130 aa).

The protein belongs to the universal ribosomal protein uS8 family. Part of the 30S ribosomal subunit. Contacts proteins S5 and S12.

Its function is as follows. One of the primary rRNA binding proteins, it binds directly to 16S rRNA central domain where it helps coordinate assembly of the platform of the 30S subunit. The chain is Small ribosomal subunit protein uS8 from Enterobacter sp. (strain 638).